The primary structure comprises 354 residues: Rhodopsin (354 aa).

The Extracellular segment spans residues 1–36 (MNGTEGPNFYVPFSNKSGVVRSPFEYPQYYLAEPWQ). N-linked (GlcNAc...) asparagine glycans are attached at residues Asn-2 and Asn-15. Residues 37 to 61 (YSVLAAYMFLLILLGFPVNFLTLYV) form a helical membrane-spanning segment. The Cytoplasmic segment spans residues 62 to 73 (TIQHKKLRTPLN). Residues 74–96 (YILLNLAFANHFMVFGGFPVTMY) traverse the membrane as a helical segment. Residues 97–110 (SSMHGYFVFGQTGC) are Extracellular-facing. Residues Cys-110 and Cys-187 are joined by a disulfide bond. The helical transmembrane segment at 111 to 133 (YIEGFFATMGGEIALWSLVVLAI) threads the bilayer. Residues 134–136 (ERY) carry the 'Ionic lock' involved in activated form stabilization motif. Over 134–152 (ERYVVVCKPMSNFRFGENH) the chain is Cytoplasmic. The chain crosses the membrane as a helical span at residues 153–173 (AIMGVMMTWIMALACAAPPLF). At 174-202 (GWSRYIPEGMQCSCGVDYYTLKPEVNNES) the chain is on the extracellular side. Residues 203-224 (FVIYMFLVHFTIPLMIIFFCYG) form a helical membrane-spanning segment. Topologically, residues 225–252 (RLVCTVKEAAAQQQESATTQKAEKEVTR) are cytoplasmic. Residues 253-274 (MVIIMVVAFLICWVPYASVAFY) traverse the membrane as a helical segment. Over 275–286 (IFSNQGTDFGPI) the chain is Extracellular. The chain crosses the membrane as a helical span at residues 287–308 (FMTVPAFFAKSSAIYNPVIYIV). An N6-(retinylidene)lysine modification is found at Lys-296. Topologically, residues 309–354 (LNKQFRNCMITTICCGKNPFGDDETTSAATSKTEASSVSSSQVSPA) are cytoplasmic. S-palmitoyl cysteine attachment occurs at residues Cys-322 and Cys-323. Residues 332–354 (ETTSAATSKTEASSVSSSQVSPA) are disordered. Over residues 334-354 (TSAATSKTEASSVSSSQVSPA) the composition is skewed to low complexity.

It belongs to the G-protein coupled receptor 1 family. Opsin subfamily. In terms of processing, contains one covalently linked retinal chromophore. Upon light absorption, the covalently bound 11-cis-retinal is converted to all-trans-retinal. After hydrolysis of the Schiff base and release of the covalently bound all-trans-retinal, active rhodopsin is regenerated by binding of a fresh molecule of 11-cis-retinal.

The protein resides in the membrane. It is found in the cell projection. It localises to the cilium. Its subcellular location is the photoreceptor outer segment. Photoreceptor required for image-forming vision at low light intensity. Required for photoreceptor cell viability after birth. Light-induced isomerization of 11-cis to all-trans retinal triggers a conformational change that activates signaling via G-proteins. Subsequent receptor phosphorylation mediates displacement of the bound G-protein alpha subunit by arrestin and terminates signaling. The sequence is that of Rhodopsin (RHO) from Ambystoma tigrinum (Eastern tiger salamander).